A 302-amino-acid polypeptide reads, in one-letter code: tRNA pseudouridine synthase B (302 aa).

Asp48 functions as the Nucleophile in the catalytic mechanism.

This sequence belongs to the pseudouridine synthase TruB family. Type 1 subfamily.

The catalysed reaction is uridine(55) in tRNA = pseudouridine(55) in tRNA. Responsible for synthesis of pseudouridine from uracil-55 in the psi GC loop of transfer RNAs. This chain is tRNA pseudouridine synthase B, found in Xylella fastidiosa (strain Temecula1 / ATCC 700964).